A 256-amino-acid polypeptide reads, in one-letter code: Isoprenyl transferase (256 aa).

The active site involves aspartate 33. Aspartate 33 is a binding site for Mg(2+). Substrate-binding positions include 34–37 (GNGR), tryptophan 38, arginine 46, histidine 50, and 78–80 (STE). Asparagine 81 acts as the Proton acceptor in catalysis. Residues tryptophan 82, arginine 84, arginine 201, and 207-209 (RIS) each bind substrate. Mg(2+) is bound at residue glutamate 220.

This sequence belongs to the UPP synthase family. In terms of assembly, homodimer. It depends on Mg(2+) as a cofactor.

Functionally, catalyzes the condensation of isopentenyl diphosphate (IPP) with allylic pyrophosphates generating different type of terpenoids. The protein is Isoprenyl transferase of Staphylococcus epidermidis (strain ATCC 35984 / DSM 28319 / BCRC 17069 / CCUG 31568 / BM 3577 / RP62A).